The chain runs to 184 residues: MTDTAPKAPVVDIPAITALVEPEVKALGLELVRIAMFGGKSDPTLQIMAERPDTRQIGLTECEALSRRLSEIFDEQDPIEDAYRLEVSSPGIDRPLTRRKDYQDWKGFSARIRLSAPLDGRKQFDGEIIGIDDADNVILDCPKVGQKILPFSAIERSKLLLTDALIAATQPLDSEGADQIVREG.

Belongs to the RimP family.

It is found in the cytoplasm. Required for maturation of 30S ribosomal subunits. In Zymomonas mobilis subsp. mobilis (strain ATCC 31821 / ZM4 / CP4), this protein is Ribosome maturation factor RimP.